Consider the following 98-residue polypeptide: NADH-ubiquinone oxidoreductase chain 4L (98 aa).

The next 3 helical transmembrane spans lie at 1 to 21 (MTMVYANIFLAFIMSLMGLLM), 29 to 49 (SLLCLEGMMLSLFVMMTVTIL), and 61 to 81 (IILLVFAACEAALGLSLLVMV).

It belongs to the complex I subunit 4L family. As to quaternary structure, core subunit of respiratory chain NADH dehydrogenase (Complex I) which is composed of 45 different subunits.

It is found in the mitochondrion inner membrane. The enzyme catalyses a ubiquinone + NADH + 5 H(+)(in) = a ubiquinol + NAD(+) + 4 H(+)(out). Functionally, core subunit of the mitochondrial membrane respiratory chain NADH dehydrogenase (Complex I) which catalyzes electron transfer from NADH through the respiratory chain, using ubiquinone as an electron acceptor. Part of the enzyme membrane arm which is embedded in the lipid bilayer and involved in proton translocation. The chain is NADH-ubiquinone oxidoreductase chain 4L (MT-ND4L) from Mirounga angustirostris (Northern elephant seal).